We begin with the raw amino-acid sequence, 311 residues long: F-box protein At3g18320 (311 aa).

Residues 1–46 (MTLPELPKDLVEEILCFVPATSLKRLRSTCKGWNRLFKDDKRFARK) enclose the F-box domain.

The protein is F-box protein At3g18320 of Arabidopsis thaliana (Mouse-ear cress).